Consider the following 207-residue polypeptide: uncharacterized protein (207 aa).

It is found in the mitochondrion. This is an uncharacterized protein from Marchantia polymorpha (Common liverwort).